Reading from the N-terminus, the 129-residue chain is Glycine cleavage system H protein (129 aa).

The Lipoyl-binding domain maps to 24–106 (SYTVGISEHA…FGDGWFFRVM (83 aa)). Lys65 bears the N6-lipoyllysine mark.

This sequence belongs to the GcvH family. In terms of assembly, the glycine cleavage system is composed of four proteins: P, T, L and H. It depends on (R)-lipoate as a cofactor.

The glycine cleavage system catalyzes the degradation of glycine. The H protein shuttles the methylamine group of glycine from the P protein to the T protein. The protein is Glycine cleavage system H protein of Shewanella woodyi (strain ATCC 51908 / MS32).